The primary structure comprises 859 residues: DNA-directed RNA polymerase subunit Rpo1C (859 aa).

It belongs to the RNA polymerase beta' chain family. Part of the RNA polymerase complex. This protein undergoes a protein self splicing that involves a post-translational excision of the intervening region (intein) followed by peptide ligation.

It localises to the cytoplasm. It carries out the reaction RNA(n) + a ribonucleoside 5'-triphosphate = RNA(n+1) + diphosphate. Its function is as follows. DNA-dependent RNA polymerase (RNAP) catalyzes the transcription of DNA into RNA using the four ribonucleoside triphosphates as substrates. Forms part of the jaw domain. This chain is DNA-directed RNA polymerase subunit Rpo1C, found in Methanocaldococcus jannaschii (strain ATCC 43067 / DSM 2661 / JAL-1 / JCM 10045 / NBRC 100440) (Methanococcus jannaschii).